The sequence spans 321 residues: D-alanine--D-alanine ligase (321 aa).

One can recognise an ATP-grasp domain in the interval 121-315 (RSWFLTNNIN…FTNLIEEIIK (195 aa)). 147–199 (PVKRPYVIKPLTQGSSIGVEVIFEEDDFNFADYNFPYGYQVIIEQYIKGRELQ) is an ATP binding site. Positions 268, 282, and 284 each coordinate Mg(2+).

This sequence belongs to the D-alanine--D-alanine ligase family. The cofactor is Mg(2+). It depends on Mn(2+) as a cofactor.

Its subcellular location is the cytoplasm. The catalysed reaction is 2 D-alanine + ATP = D-alanyl-D-alanine + ADP + phosphate + H(+). It functions in the pathway cell wall biogenesis; peptidoglycan biosynthesis. Functionally, cell wall formation. This chain is D-alanine--D-alanine ligase, found in Rickettsia felis (strain ATCC VR-1525 / URRWXCal2) (Rickettsia azadi).